A 255-amino-acid polypeptide reads, in one-letter code: Triosephosphate isomerase (255 aa).

Residue 9 to 11 coordinates substrate; that stretch reads NWK. Catalysis depends on histidine 95, which acts as the Electrophile. The active-site Proton acceptor is glutamate 167. Substrate-binding positions include glycine 173, serine 212, and 233–234; that span reads GG.

It belongs to the triosephosphate isomerase family. Homodimer.

It is found in the cytoplasm. It catalyses the reaction D-glyceraldehyde 3-phosphate = dihydroxyacetone phosphate. It participates in carbohydrate biosynthesis; gluconeogenesis. It functions in the pathway carbohydrate degradation; glycolysis; D-glyceraldehyde 3-phosphate from glycerone phosphate: step 1/1. In terms of biological role, involved in the gluconeogenesis. Catalyzes stereospecifically the conversion of dihydroxyacetone phosphate (DHAP) to D-glyceraldehyde-3-phosphate (G3P). This Escherichia fergusonii (strain ATCC 35469 / DSM 13698 / CCUG 18766 / IAM 14443 / JCM 21226 / LMG 7866 / NBRC 102419 / NCTC 12128 / CDC 0568-73) protein is Triosephosphate isomerase.